A 538-amino-acid chain; its full sequence is Syncytin-2 (538 aa).

The first 15 residues, 1-15 (MGLLLLVLILTPLLA), serve as a signal peptide directing secretion. The Extracellular segment spans residues 16–478 (AHRHPDFPLL…GWLNWEGTWK (463 aa)). The CXXC motif lies at 43-46 (CWLC). 3 cysteine pairs are disulfide-bonded: cysteine 43/cysteine 46, cysteine 43/cysteine 439, and cysteine 431/cysteine 438. Asparagine 133, asparagine 146, asparagine 177, asparagine 220, asparagine 241, asparagine 247, asparagine 312, and asparagine 332 each carry an N-linked (GlcNAc...) asparagine glycan. The segment at 354–374 (FIPLLAGLGIIAGTGTGIAGI) is fusion peptide. The CKS-17 signature appears at 414 to 430 (LQNRRGLDMLTAAQGGI). The CX6CC motif lies at 431-439 (CLALDEKCC). Asparagine 443 carries N-linked (GlcNAc...) asparagine glycosylation. A helical transmembrane segment spans residues 479–499 (WFSWVLPFTGPLVSLLLLLLF). The Cytoplasmic portion of the chain corresponds to 500-538 (GPCLLNLITQFVLSRLQAIKLQTNLSAGCRPHNIQESPF).

The protein belongs to the gamma type-C retroviral envelope protein family. HERV class-I FRD env subfamily. As to quaternary structure, the surface and transmembrane proteins form a heterodimer. They are attached by non-covalent interactions or by a labile interchain disulfide bond. Post-translationally, specific enzymatic cleavages in vivo yield the mature SU and TM proteins. The CXXC motif is highly conserved across a broad range of retroviral envelope proteins. It is thought to participate in the formation of a labile disulfide bond possibly with the CX6CC motif present in the transmembrane protein.

The protein resides in the virion. It is found in the cell membrane. Its function is as follows. This endogenous retroviral envelope protein has retained its original fusogenic properties and participates in trophoblast fusion and the formation of a syncytium during placenta morphogenesis. The interaction with MFSD2A is apparently important for this process. In terms of biological role, endogenous envelope proteins may have kept, lost or modified their original function during evolution but this one can still make pseudotypes with MLV, HIV-1 or SIV-1 virions and confer infectivity. Retroviral envelope proteins mediate receptor recognition and membrane fusion during early infection. The surface protein mediates receptor recognition, while the transmembrane protein anchors the envelope heterodimer to the viral membrane through one transmembrane domain. The other hydrophobic domain, called fusion peptide, mediates fusion of the viral membrane with the target cell membrane. This chain is Syncytin-2 (ERVFRD-1), found in Pongo pygmaeus (Bornean orangutan).